The chain runs to 304 residues: Nod factor export ATP-binding protein I (304 aa).

Positions 6-236 (IDFQQVEKRY…EIGCDVIEIY (231 aa)) constitute an ABC transporter domain. 38-45 (GPNGAGKT) contributes to the ATP binding site.

Belongs to the ABC transporter superfamily. Lipooligosaccharide exporter (TC 3.A.1.102) family. The complex is composed of two ATP-binding proteins (NodI) and two transmembrane proteins (NodJ).

The protein resides in the cell inner membrane. Part of the ABC transporter complex NodIJ involved in the export of the nodulation factors (Nod factors), the bacterial signal molecules that induce symbiosis and subsequent nodulation induction. Nod factors are LCO (lipo-chitin oligosaccharide), a modified beta-1,4-linked N-acetylglucosamine oligosaccharide. This subunit is responsible for energy coupling to the transport system. The sequence is that of Nod factor export ATP-binding protein I from Burkholderia thailandensis (strain ATCC 700388 / DSM 13276 / CCUG 48851 / CIP 106301 / E264).